Here is a 664-residue protein sequence, read N- to C-terminus: UvrABC system protein B (664 aa).

The region spanning 25-412 (KGLVSGLTDQ…LQVVEQLVRP (388 aa)) is the Helicase ATP-binding domain. 38 to 45 (GVTGSGKT) is a binding site for ATP. The Beta-hairpin motif lies at 91 to 114 (YYDYYQPEAYVPQKDMYIEKDSDI). The region spanning 428-594 (QIDDLLEEVK…GIRKAIKDIN (167 aa)) is the Helicase C-terminal domain. The UVR domain maps to 620–655 (ARLIKELESQMKKAAKNLEFERAALIRDRVVELRAA).

Belongs to the UvrB family. In terms of assembly, forms a heterotetramer with UvrA during the search for lesions. Interacts with UvrC in an incision complex.

It is found in the cytoplasm. In terms of biological role, the UvrABC repair system catalyzes the recognition and processing of DNA lesions. A damage recognition complex composed of 2 UvrA and 2 UvrB subunits scans DNA for abnormalities. Upon binding of the UvrA(2)B(2) complex to a putative damaged site, the DNA wraps around one UvrB monomer. DNA wrap is dependent on ATP binding by UvrB and probably causes local melting of the DNA helix, facilitating insertion of UvrB beta-hairpin between the DNA strands. Then UvrB probes one DNA strand for the presence of a lesion. If a lesion is found the UvrA subunits dissociate and the UvrB-DNA preincision complex is formed. This complex is subsequently bound by UvrC and the second UvrB is released. If no lesion is found, the DNA wraps around the other UvrB subunit that will check the other stand for damage. The protein is UvrABC system protein B of Dehalococcoides mccartyi (strain CBDB1).